The primary structure comprises 526 residues: Cholesterol side-chain cleavage enzyme, mitochondrial (526 aa).

A mitochondrion-targeting transit peptide spans 1-36 (MLAKGLCLRSVLVKSCQPFLSPVWQGPGLATGNGAG). Residue cysteine 459 coordinates heme.

This sequence belongs to the cytochrome P450 family. In terms of assembly, interacts with FDX1/adrenodoxin. Heme serves as cofactor. Expressed in the kidney where it localizes to the distal convoluted tubule and the thick ascending limb of the loop of Henle (at protein level). In the ovary, highly expressed in interstitial cells (at protein level). Also expressed in adrenal gland and testis.

Its subcellular location is the mitochondrion inner membrane. The enzyme catalyses 6 reduced [adrenodoxin] + cholesterol + 3 O2 + 6 H(+) = 4-methylpentanal + pregnenolone + 6 oxidized [adrenodoxin] + 4 H2O. It catalyses the reaction 2 reduced [adrenodoxin] + cholesterol + O2 + 2 H(+) = (22R)-hydroxycholesterol + 2 oxidized [adrenodoxin] + H2O. It carries out the reaction (22R)-hydroxycholesterol + 2 reduced [adrenodoxin] + O2 + 2 H(+) = (20R,22R)-20,22-dihydroxycholesterol + 2 oxidized [adrenodoxin] + H2O. The catalysed reaction is (20R,22R)-20,22-dihydroxycholesterol + 2 reduced [adrenodoxin] + O2 + 2 H(+) = 4-methylpentanal + pregnenolone + 2 oxidized [adrenodoxin] + 2 H2O. It functions in the pathway lipid metabolism; C21-steroid hormone metabolism. The protein operates within steroid metabolism; cholesterol metabolism. Its function is as follows. A cytochrome P450 monooxygenase that catalyzes the side-chain hydroxylation and cleavage of cholesterol to pregnenolone, the precursor of most steroid hormones. Catalyzes three sequential oxidation reactions of cholesterol, namely the hydroxylation at C22 followed with the hydroxylation at C20 to yield 20R,22R-hydroxycholesterol that is further cleaved between C20 and C22 to yield the C21-steroid pregnenolone and 4-methylpentanal. Mechanistically, uses molecular oxygen inserting one oxygen atom into a substrate and reducing the second into a water molecule. Two electrons are provided by NADPH via a two-protein mitochondrial transfer system comprising flavoprotein FDXR (adrenodoxin/ferredoxin reductase) and nonheme iron-sulfur protein FDX1 or FDX2 (adrenodoxin/ferredoxin). The protein is Cholesterol side-chain cleavage enzyme, mitochondrial of Rattus norvegicus (Rat).